The primary structure comprises 287 residues: Gene 31 protein (287 aa).

The interval 13-58 is disordered; sequence AGRPAGLPGRGGQPGLAGAEGGEGRAGPGAHGDGVRQGGGLQTGGA. Residues 20-58 show a composition bias toward gly residues; the sequence is PGRGGQPGLAGAEGGEGRAGPGAHGDGVRQGGGLQTGGA.

The protein belongs to the herpesviridae UL92 family.

This is Gene 31 protein (31) from Equine herpesvirus 2 (strain 86/87) (EHV-2).